We begin with the raw amino-acid sequence, 319 residues long: HTH-type transcriptional regulator YidZ (319 aa).

The HTH lysR-type domain occupies 8–65 (LDLNLLLCLQLLMQERSVTKAAKRMNVTPSAVSKSLAKLRAWFDDPLFVNSPLGLSPT). Positions 25–44 (VTKAAKRMNVTPSAVSKSLA) form a DNA-binding region, H-T-H motif.

This sequence belongs to the LysR transcriptional regulatory family.

Its function is as follows. Involved in anaerobic NO protection. The sequence is that of HTH-type transcriptional regulator YidZ from Escherichia coli O139:H28 (strain E24377A / ETEC).